The primary structure comprises 97 residues: Defensin alpha 4 (97 aa).

Residues 1–19 (MRIIAILAAILLVALQVRA) form the signal peptide. Positions 20–63 (GPLQARGDEAPGQEQRGPEDQDISISFAWDKSSALQVSGSTRGM) are excised as a propeptide. Disulfide bonds link C65/C93, C67/C82, and C72/C92. Residue D97 is a propeptide.

It belongs to the alpha-defensin family. As to quaternary structure, homodimer; homodimerization seems to be required for killing S.aureus, but not E.coli. Interacts with CD4. Interacts with Bacillus anthracis lef; homodimerization is required for the interaction. The three-dimensional structure formed by the three intramolecular disulfide bridges is indispensable for effective bacterial killing.

Its subcellular location is the secreted. It is found in the cytoplasmic vesicle. It localises to the secretory vesicle. Functionally, host-defense peptide that has antimicrobial activity against Gram-negative bacteria, and to a lesser extent also against Gram-positive bacteria and fungi. Exhibits antimicrobial activity against Gram-negative E.coli and E.aerogenes and Gram-positive S.faecalis, S.aureus and B.cereus and the yeast C.albicans (in vitro). Inhibits corticotropin (ACTH)-stimulated corticosterone production (in vitro). Inhibits enzymatic activity of B.anthracis lef/anthrax lethal factor (in vitro). This is Defensin alpha 4 (DEFA4) from Pan troglodytes (Chimpanzee).